A 460-amino-acid polypeptide reads, in one-letter code: Homocitrate synthase (460 aa).

The region spanning 3–258 (VGILDSTLRE…IEVVKLNKLQ (256 aa)) is the Pyruvate carboxyltransferase domain. Residue arginine 11 participates in 2-oxoglutarate binding. Glutamate 12 serves as a coordination point for Mg(2+). 2-oxoglutarate-binding residues include histidine 75, arginine 135, and threonine 169. Positions 197 and 199 each coordinate Mg(2+). Histidine 291 acts as the Proton acceptor in catalysis.

It belongs to the alpha-IPM synthase/homocitrate synthase family. Homocitrate synthase LYS20/LYS21 subfamily. Forms a homotetramer in the absence of lysine, and is in hexadecamer-octamer equilibrium in the presence of lysine. It depends on Mg(2+) as a cofactor. Mn(2+) is required as a cofactor.

The enzyme catalyses acetyl-CoA + 2-oxoglutarate + H2O = (2R)-homocitrate + CoA + H(+). It participates in amino-acid biosynthesis; L-lysine biosynthesis via AAA pathway; L-alpha-aminoadipate from 2-oxoglutarate: step 1/5. Its activity is regulated as follows. Inhibited by lysine. Catalyzes the aldol-type condensation of 2-oxoglutarate with acetyl-CoA to yield homocitrate. Carries out the first step of the alpha-aminoadipate (AAA) lysine biosynthesis pathway. The polypeptide is Homocitrate synthase (Sulfurisphaera tokodaii (strain DSM 16993 / JCM 10545 / NBRC 100140 / 7) (Sulfolobus tokodaii)).